Consider the following 154-residue polypeptide: Myoglobin (154 aa).

Positions 2 to 148 (GLSDGEWQLV…FRNDMAAQYK (147 aa)) constitute a Globin domain. Residue Ser4 is modified to Phosphoserine. Residue His65 coordinates nitrite. Residue His65 participates in O2 binding. Thr68 carries the post-translational modification Phosphothreonine. Position 94 (His94) interacts with heme b.

The protein belongs to the globin family. As to quaternary structure, monomeric.

The protein localises to the cytoplasm. It is found in the sarcoplasm. The catalysed reaction is Fe(III)-heme b-[protein] + nitric oxide + H2O = Fe(II)-heme b-[protein] + nitrite + 2 H(+). It carries out the reaction H2O2 + AH2 = A + 2 H2O. In terms of biological role, monomeric heme protein which primary function is to store oxygen and facilitate its diffusion within muscle tissues. Reversibly binds oxygen through a pentacoordinated heme iron and enables its timely and efficient release as needed during periods of heightened demand. Depending on the oxidative conditions of tissues and cells, and in addition to its ability to bind oxygen, it also has a nitrite reductase activity whereby it regulates the production of bioactive nitric oxide. Under stress conditions, like hypoxia and anoxia, it also protects cells against reactive oxygen species thanks to its pseudoperoxidase activity. This Bos mutus grunniens (Wild yak) protein is Myoglobin (MB).